Consider the following 56-residue polypeptide: Large ribosomal subunit protein bL32 (56 aa).

The interval 1 to 37 is disordered; that stretch reads MAVQQNKKSRSRRDMRRSHDALTTAAISVDKASGEKH. Residues 7–16 show a composition bias toward basic residues; the sequence is KKSRSRRDMR.

The protein belongs to the bacterial ribosomal protein bL32 family.

This Pasteurella multocida (strain Pm70) protein is Large ribosomal subunit protein bL32 (rpmF).